The sequence spans 356 residues: uncharacterized protein (356 aa).

Transmembrane regions (helical) follow at residues 2–22 (FEAFIYNISVIVAGIYLFHRL), 35–55 (AYVTVLMTIVSLLLSVYPIPY), 74–94 (FTNMVYTLSATVIVAIVEIVV), 99–119 (IMYGVTLIVIAAVTSAIGPFL), 124–144 (VLSLLILNVVTIIILFGVALV), and 154–174 (IILIPISLIITLASAITFVDI). Residues 218–353 (QSIALLLIDI…GRNKVMFNPI (136 aa)) enclose the GGDEF domain.

It is found in the cell membrane. This is an uncharacterized protein from Staphylococcus aureus (strain bovine RF122 / ET3-1).